Consider the following 518-residue polypeptide: ATPase expression protein 2, mitochondrial (518 aa).

A mitochondrion-targeting transit peptide spans 1–15 (MLKKSRVLGKIPIPY).

The protein belongs to the AEP2 family. In terms of assembly, binds to the 5'UTR of the OLI1 mRNA.

It localises to the mitochondrion. In terms of biological role, required for translation of the mitochondrial OLI1 transcript coding for the mitochondrial ATP synthase subunit 9. This Kluyveromyces lactis (strain ATCC 8585 / CBS 2359 / DSM 70799 / NBRC 1267 / NRRL Y-1140 / WM37) (Yeast) protein is ATPase expression protein 2, mitochondrial (AEP2).